The following is a 2376-amino-acid chain: Protein Ycf2 (2376 aa).

Disordered regions lie at residues serine 173–aspartate 194, threonine 226–asparagine 256, and lysine 952–glutamate 1011. Over residues lysine 235–arginine 245 the composition is skewed to low complexity. Composition is skewed to basic and acidic residues over residues leucine 246–asparagine 255 and lysine 960–arginine 1009. ATP is bound at residue glycine 1441 to serine 1448. Disordered stretches follow at residues tyrosine 1515–proline 1534, leucine 1860–lysine 2046, and proline 2112–serine 2230. Acidic residues predominate over residues threonine 1866–glutamate 2025. Residues glycine 2026–arginine 2038 show a composition bias toward basic and acidic residues. 2 stretches are compositionally biased toward acidic residues: residues proline 2112–glutamate 2129 and glycine 2136–serine 2213.

It belongs to the Ycf2 family.

The protein localises to the plastid. It is found in the chloroplast stroma. Probable ATPase of unknown function. Its presence in a non-photosynthetic plant (Epifagus virginiana) and experiments in tobacco indicate that it has an essential function which is probably not related to photosynthesis. This chain is Protein Ycf2, found in Oenothera glazioviana (Large-flowered evening primrose).